Reading from the N-terminus, the 89-residue chain is Large ribosomal subunit protein bL27 (89 aa).

Belongs to the bacterial ribosomal protein bL27 family.

This is Large ribosomal subunit protein bL27 from Ruegeria sp. (strain TM1040) (Silicibacter sp.).